Reading from the N-terminus, the 499-residue chain is Glycolate oxidase subunit GlcD (499 aa).

The 179-residue stretch at 52 to 230 (YRTRPLLVVL…TEVTVKLLPK (179 aa)) folds into the FAD-binding PCMH-type domain.

The protein belongs to the FAD-binding oxidoreductase/transferase type 4 family. As to quaternary structure, the glycolate oxidase likely consists of three subunits, GlcD, GlcE and GlcF. The cofactor is FAD.

It is found in the cell inner membrane. It carries out the reaction glycolate + A = glyoxylate + AH2. It catalyses the reaction (R)-lactate + A = pyruvate + AH2. Functionally, component of a complex that catalyzes the oxidation of glycolate to glyoxylate. Is required for E.coli to grow on glycolate as a sole source of carbon. Is also able to oxidize D-lactate ((R)-lactate) with a similar rate. Does not link directly to O(2), and 2,6-dichloroindophenol (DCIP) and phenazine methosulfate (PMS) can act as artificial electron acceptors in vitro, but the physiological molecule that functions as a primary electron acceptor during glycolate oxidation is unknown. The sequence is that of Glycolate oxidase subunit GlcD (glcD) from Escherichia coli O6:H1 (strain CFT073 / ATCC 700928 / UPEC).